Consider the following 346-residue polypeptide: Protein RecA (346 aa).

65–72 (GPESSGKT) is a binding site for ATP.

This sequence belongs to the RecA family.

It localises to the cytoplasm. In terms of biological role, can catalyze the hydrolysis of ATP in the presence of single-stranded DNA, the ATP-dependent uptake of single-stranded DNA by duplex DNA, and the ATP-dependent hybridization of homologous single-stranded DNAs. It interacts with LexA causing its activation and leading to its autocatalytic cleavage. The sequence is that of Protein RecA from Pseudomonas aeruginosa (strain UCBPP-PA14).